Here is a 183-residue protein sequence, read N- to C-terminus: Dual-action ribosomal maturation protein DarP (183 aa).

Residues methionine 1–glutamate 23 form a disordered region. Residues aspartate 7–glutamate 23 show a composition bias toward acidic residues.

Belongs to the DarP family.

The protein resides in the cytoplasm. In terms of biological role, member of a network of 50S ribosomal subunit biogenesis factors which assembles along the 30S-50S interface, preventing incorrect 23S rRNA structures from forming. Promotes peptidyl transferase center (PTC) maturation. This chain is Dual-action ribosomal maturation protein DarP, found in Cronobacter sakazakii (strain ATCC BAA-894) (Enterobacter sakazakii).